The primary structure comprises 421 residues: Alpha-1-antitrypsin-related protein (421 aa).

Residues 1-21 (MPFSVSWGILLLAGLCCLVPS) form the signal peptide. Residues Asn56, Asn110, Asn148, and Asn274 are each glycosylated (N-linked (GlcNAc...) asparagine).

It belongs to the serpin family. As to quaternary structure, interacts with CANX and PDIA3. Glycosylated. Expressed in the liver, leukocytes and testis. Also detected in brain, colon, uterus, esophagus, spleen, trachea, kidney and lung.

The protein localises to the endoplasmic reticulum. Putative serine protease inhibitor. The chain is Alpha-1-antitrypsin-related protein (SERPINA2) from Homo sapiens (Human).